The primary structure comprises 496 residues: Putative (R)-citramalate synthase CimA (496 aa).

The Pyruvate carboxyltransferase domain maps to 3–253; the sequence is VRVLDTTLRD…DTSINIEMLY (251 aa).

It belongs to the alpha-IPM synthase/homocitrate synthase family. Homodimer.

The enzyme catalyses pyruvate + acetyl-CoA + H2O = (3R)-citramalate + CoA + H(+). It participates in amino-acid biosynthesis; L-isoleucine biosynthesis; 2-oxobutanoate from pyruvate: step 1/3. Its function is as follows. Catalyzes the condensation of pyruvate and acetyl-coenzyme A to form (R)-citramalate. The polypeptide is Putative (R)-citramalate synthase CimA (Methanothermobacter thermautotrophicus (strain ATCC 29096 / DSM 1053 / JCM 10044 / NBRC 100330 / Delta H) (Methanobacterium thermoautotrophicum)).